Reading from the N-terminus, the 44-residue chain is Thaumatin-like protein 5 (44 aa).

This sequence belongs to the thaumatin family.

This is Thaumatin-like protein 5 from Glebionis coronaria (Crown daisy).